A 207-amino-acid polypeptide reads, in one-letter code: MEGDAPVAAAAHYQPASPPRDACVYNSCYCEENIWKLCEYIKNHDQYPLEECYAVFISNERKMIPIWKQQARPGDGPVIWDYHVVLLHVSSGGQSFIYDLDTVLPFPCPFDTYVEDAFKSDEDIHPQFRRKFRVIRADSYLKNFASDRSHMKDSSGNWREPPPSYPCIETGDSKMNLNDFISMDPEVGWGAVYSLPEFVHRFSSQNY.

Catalysis depends on residues cysteine 30, histidine 83, and aspartate 99.

It belongs to the NTAQ1 family. Monomer.

Its subcellular location is the cytoplasm. It localises to the cytosol. It is found in the nucleus. The enzyme catalyses N-terminal L-glutaminyl-[protein] + H2O = N-terminal L-glutamyl-[protein] + NH4(+). In terms of biological role, mediates the side-chain deamidation of N-terminal glutamine residues to glutamate, an important step in N-end rule pathway of protein degradation. Conversion of the resulting N-terminal glutamine to glutamate renders the protein susceptible to arginylation, polyubiquitination and degradation as specified by the N-end rule. Does not act on substrates with internal or C-terminal glutamine and does not act on non-glutamine residues in any position. Does not deaminate acetylated N-terminal glutamine. With the exception of proline, all tested second-position residues on substrate peptides do not greatly influence the activity. In contrast, a proline at position 2, virtually abolishes deamidation of N-terminal glutamine. The sequence is that of Protein N-terminal glutamine amidohydrolase (NTAQ1) from Bos taurus (Bovine).